A 633-amino-acid chain; its full sequence is Probable extracellular metalloproteinase 5 (633 aa).

The signal sequence occupies residues 1–20 (MHGLLLAAAGLLSLPLHVLA). The propeptide occupies 21-244 (HPQPSTNLAG…VHNVVDYVSH (224 aa)). A glycan (N-linked (GlcNAc...) asparagine) is linked at asparagine 285. Position 428 (histidine 428) interacts with Zn(2+). Glutamate 429 is an active-site residue. Histidine 432 serves as a coordination point for Zn(2+). Residues asparagine 592 and asparagine 621 are each glycosylated (N-linked (GlcNAc...) asparagine).

The protein belongs to the peptidase M36 family. The cofactor is Zn(2+).

It localises to the secreted. Secreted metalloproteinase probably acting as a virulence factor. This is Probable extracellular metalloproteinase 5 (MEP5) from Trichophyton verrucosum (strain HKI 0517).